Consider the following 244-residue polypeptide: Robin (244 aa).

The protein is Robin of Acanthamoeba polyphaga (Amoeba).